Reading from the N-terminus, the 535-residue chain is MYTRNLLWLVSLVSAAPLYAADVPANTPLAPQQVFRYNNHSDPGTLDPQKVEENTAAQIVLDLFEGLVWMDGEGQVQPAQAERWEILDGGKRYIFHLRSGLQWSDGQPLTAEDFVLGWQRAVDPKTASPFAGYLAQAHINNAAAIVAGKADVTSLGVKATDDRTLEVTLEQPVPWFTTMLAWPTLFPVPHHVIAKHGDSWSKPENMVYNGAFVLDQWVVNEKITARKNPKYRDAQHTVLQQVEYLALDNSVTGYNRYRAGEVDLTWVPAQQIPAIEKSLPGELRIIPRLNSEYYNFNLEKPPFNDVRVRRALYLTVDRQLIAQKVLGLRTPATTLTPPEVKGFSATTFDELQKPMSERVAMAKALLKQAGYDASHPLRFELFYNKYDLHEKTAIALSSEWKKWLGAQVTLRTMEWKTYLDARRAGDFMLSRQSWDATYNDASSFLNTLKSDSEENVGHWKNAQYDALLNQATQITDATKRNALYQQAEVIINQQAPLIPIYYQPLIKLLKPYVGGFPLHNPQDYVYSKELYIKAH.

The first 20 residues, 1-20, serve as a signal peptide directing secretion; the sequence is MYTRNLLWLVSLVSAAPLYA.

Belongs to the bacterial solute-binding protein 5 family.

The protein localises to the periplasm. In terms of biological role, probably part of a deoxycholate transport system. Its expression in the presence of deoxycholate in a ygiS deletion mutant increases intracellular deoxycholate levels and decreases cell growth; higher expression in the presence of deoxycholate inhibits cell growth completely. Bile acid detergents such as deoxycholate are important for host defense against bacterial growth in the gall bladder and duodenum. The sequence is that of Probable deoxycholate-binding periplasmic protein YgiS (ygiS) from Escherichia coli (strain K12).